The sequence spans 350 residues: 3-dehydroquinate synthase (350 aa).

NAD(+) is bound by residues 106 to 110 (GVVGD), 130 to 131 (TS), lysine 143, and lysine 152. Zn(2+)-binding residues include glutamate 185, histidine 246, and histidine 263.

The protein belongs to the sugar phosphate cyclases superfamily. Dehydroquinate synthase family. NAD(+) serves as cofactor. Co(2+) is required as a cofactor. It depends on Zn(2+) as a cofactor.

It is found in the cytoplasm. It carries out the reaction 7-phospho-2-dehydro-3-deoxy-D-arabino-heptonate = 3-dehydroquinate + phosphate. It functions in the pathway metabolic intermediate biosynthesis; chorismate biosynthesis; chorismate from D-erythrose 4-phosphate and phosphoenolpyruvate: step 2/7. Functionally, catalyzes the conversion of 3-deoxy-D-arabino-heptulosonate 7-phosphate (DAHP) to dehydroquinate (DHQ). This Clostridium perfringens (strain 13 / Type A) protein is 3-dehydroquinate synthase.